A 691-amino-acid chain; its full sequence is Methionine--tRNA ligase (691 aa).

The short motif at 14 to 24 (PYANGPFHLGH) is the 'HIGH' region element. Residues cysteine 148, cysteine 151, cysteine 161, and cysteine 164 each contribute to the Zn(2+) site. Residues 344-348 (KMSKS) carry the 'KMSKS' region motif. Lysine 347 serves as a coordination point for ATP. The tRNA-binding domain maps to 585 to 691 (DFDRVDLRVA…PGAKPGMRVR (107 aa)).

It belongs to the class-I aminoacyl-tRNA synthetase family. MetG type 1 subfamily. Homodimer. Zn(2+) is required as a cofactor.

The protein localises to the cytoplasm. The catalysed reaction is tRNA(Met) + L-methionine + ATP = L-methionyl-tRNA(Met) + AMP + diphosphate. Functionally, is required not only for elongation of protein synthesis but also for the initiation of all mRNA translation through initiator tRNA(fMet) aminoacylation. This is Methionine--tRNA ligase from Verminephrobacter eiseniae (strain EF01-2).